We begin with the raw amino-acid sequence, 1712 residues long: MGRDQRAVAGPALRRWLLLGTVTVGFLAQSVLAGVKKFDVPCGGRDCSGGCQCYPEKGGRGQPGPVGPQGYNGPPGLQGFPGLQGRKGDKGERGAPGVTGPKGDVGARGVSGFPGADGIPGHPGQGGPRGRPGYDGCNGTQGDSGPQGPPGSEGFTGPPGPQGPKGQKGEPYALPKEERDRYRGEPGEPGLVGFQGPPGRPGHVGQMGPVGAPGRPGPPGPPGPKGQQGNRGLGFYGVKGEKGDVGQPGPNGIPSDTLHPIIAPTGVTFHPDQYKGEKGSEGEPGIRGISLKGEEGIMGFPGLRGYPGLSGEKGSPGQKGSRGLDGYQGPDGPRGPKGEAGDPGPPGLPAYSPHPSLAKGARGDPGFPGAQGEPGSQGEPGDPGLPGPPGLSIGDGDQRRGLPGEMGPKGFIGDPGIPALYGGPPGPDGKRGPPGPPGLPGPPGPDGFLFGLKGAKGRAGFPGLPGSPGARGPKGWKGDAGECRCTEGDEAIKGLPGLPGPKGFAGINGEPGRKGDRGDPGQHGLPGFPGLKGVPGNIGAPGPKGAKGDSRTITTKGERGQPGVPGVPGMKGDDGSPGRDGLDGFPGLPGPPGDGIKGPPGDPGYPGIPGTKGTPGEMGPPGLGLPGLKGQRGFPGDAGLPGPPGFLGPPGPAGTPGQIDCDTDVKRAVGGDRQEAIQPGCIGGPKGLPGLPGPPGPTGAKGLRGIPGFAGADGGPGPRGLPGDAGREGFPGPPGFIGPRGSKGAVGLPGPDGSPGPIGLPGPDGPPGERGLPGEVLGAQPGPRGDAGVPGQPGLKGLPGDRGPPGFRGSQGMPGMPGLKGQPGLPGPSGQPGLYGPPGLHGFPGAPGQEGPLGLPGIPGREGLPGDRGDPGDTGAPGPVGMKGLSGDRGDAGFTGEQGHPGSPGFKGIDGMPGTPGLKGDRGSPGMDGFQGMPGLKGRPGFPGSKGEAGFFGIPGLKGLAGEPGFKGSRGDPGPPGPPPVILPGMKDIKGEKGDEGPMGLKGYLGAKGIQGMPGIPGLSGIPGLPGRPGHIKGVKGDIGVPGIPGLPGFPGVAGPPGITGFPGFIGSRGDKGAPGRAGLYGEIGATGDFGDIGDTINLPGRPGLKGERGTTGIPGLKGFFGEKGTEGDIGFPGITGVTGVQGPPGLKGQTGFPGLTGPPGSQGELGRIGLPGGKGDDGWPGAPGLPGFPGLRGIRGLHGLPGTKGFPGSPGSDIHGDPGFPGPPGERGDPGEANTLPGPVGVPGQKGDQGAPGERGPPGSPGLQGFPGITPPSNISGAPGDKGAPGIFGLKGYRGPPGPPGSAALPGSKGDTGNPGAPGTPGTKGWAGDSGPQGRPGVFGLPGEKGPRGEQGFMGNTGPTGAVGDRGPKGPKGDPGFPGAPGTVGAPGIAGIPQKIAVQPGTVGPQGRRGPPGAPGEMGPQGPPGEPGFRGAPGKAGPQGRGGVSAVPGFRGDEGPIGHQGPIGQEGAPGRPGSPGLPGMPGRSVSIGYLLVKHSQTDQEPMCPVGMNKLWSGYSLLYFEGQEKAHNQDLGLAGSCLARFSTMPFLYCNPGDVCYYASRNDKSYWLSTTAPLPMMPVAEDEIKPYISRCSVCEAPAIAIAVHSQDVSIPHCPAGWRSLWIGYSFLMHTAAGDEGGGQSLVSPGSCLEDFRATPFIECNGGRGTCHYYANKYSFWLTTIPEQSFQGSPSADTLKAGLIRTHISRCQVCMKNL.

The N-terminal stretch at 1 to 25 (MGRDQRAVAGPALRRWLLLGTVTVG) is a signal peptide. Residues 26 to 183 (FLAQSVLAGV…LPKEERDRYR (158 aa)) constitute a propeptide, N-terminal propeptide (7S domain). Disordered regions lie at residues 60 to 237 (RGQP…GFYG), 302 to 448 (GLRG…PDGF), 507 to 640 (INGE…DAGL), 690 to 906 (GLPG…SPGF), and 1157 to 1480 (TGPP…GLPG). Low complexity predominate over residues 68-84 (PQGYNGPPGLQGFPGLQ). Positions 121–130 (GHPGQGGPRG) are enriched in gly residues. Asparagine 138 carries N-linked (GlcNAc...) asparagine glycosylation. Positions 140-153 (TQGDSGPQGPPGSE) are enriched in low complexity. A compositionally biased stretch (basic and acidic residues) spans 175–186 (PKEERDRYRGEP). A triple-helical region region spans residues 184-1484 (GEPGEPGLVG…SPGLPGMPGR (1301 aa)). 2 stretches are compositionally biased toward pro residues: residues 215–224 (RPGPPGPPGP) and 433–445 (PPGP…PPGP). Composition is skewed to basic and acidic residues over residues 511-520 (PGRKGDRGDP) and 571-582 (KGDDGSPGRDGL). 2 stretches are compositionally biased toward low complexity: residues 628 to 640 (LKGQ…DAGL) and 698 to 710 (TGAK…PGFA). Over residues 711–720 (GADGGPGPRG) the composition is skewed to gly residues. A compositionally biased stretch (low complexity) spans 721–730 (LPGDAGREGF). Residues 752–766 (DGSPGPIGLPGPDGP) are compositionally biased toward pro residues. 5 stretches are compositionally biased toward low complexity: residues 769 to 778 (ERGLPGEVLG), 813 to 823 (MPGMPGLKGQP), 831 to 844 (QPGL…HGFP), 1302 to 1328 (GSAA…KGWA), and 1400 to 1421 (QPGT…EMGP). Positions 1489 to 1712 (GYLLVKHSQT…SRCQVCMKNL (224 aa)) constitute a Collagen IV NC1 domain. A 3'-bromotyrosine modification is found at tyrosine 1490. 6 disulfide bridges follow: cysteine 1504/cysteine 1593, cysteine 1537/cysteine 1590, cysteine 1549/cysteine 1555, cysteine 1612/cysteine 1708, cysteine 1646/cysteine 1705, and cysteine 1658/cysteine 1665.

The protein belongs to the type IV collagen family. As to quaternary structure, there are six type IV collagen isoforms, alpha 1(IV)-alpha 6(IV), each of which can form a triple helix structure with 2 other chains to generate type IV collagen network. Interacts with EFEMP2. Prolines at the third position of the tripeptide repeating unit (G-X-Y) are hydroxylated in some or all of the chains. In terms of processing, type IV collagens contain numerous cysteine residues which are involved in inter- and intramolecular disulfide bonding. 12 of these, located in the NC1 domain, are conserved in all known type IV collagens. Post-translationally, the trimeric structure of the NC1 domains is stabilized by covalent bonds between Lys and Met residues. Proteolytic processing produces the C-terminal NC1 peptide, canstatin.

The protein localises to the secreted. It is found in the extracellular space. Its subcellular location is the extracellular matrix. It localises to the basement membrane. In terms of biological role, type IV collagen is the major structural component of glomerular basement membranes (GBM), forming a 'chicken-wire' meshwork together with laminins, proteoglycans and entactin/nidogen. Functionally, canstatin, a cleavage product corresponding to the collagen alpha 2(IV) NC1 domain, possesses both anti-angiogenic and anti-tumor cell activity. It inhibits proliferation and migration of endothelial cells, reduces mitochondrial membrane potential, and induces apoptosis. Specifically induces Fas-dependent apoptosis and activates procaspase-8 and -9 activity. Ligand for alphavbeta3 and alphavbeta5 integrins. The chain is Collagen alpha-2(IV) chain from Homo sapiens (Human).